Reading from the N-terminus, the 350-residue chain is Phosphotriesterase-related protein (350 aa).

Positions 22, 24, 169, 201, 230, and 298 each coordinate a divalent metal cation.

This sequence belongs to the metallo-dependent hydrolases superfamily. Phosphotriesterase family. Requires a divalent metal cation as cofactor.

This Drosophila sechellia (Fruit fly) protein is Phosphotriesterase-related protein.